Reading from the N-terminus, the 545-residue chain is MELKNIVNSYNITNILGYLRRSRQDMEREKRTGEDTLTEQKELMNKILTAIEIPYELKMEIGSGESIDGRPVFKECLKDLEEGKYQAIAVKEITRLSRGSYSDAGQIVNLLQSKRLIIITPYKVYDPRNPVDMRQIRFELFMAREEFEMTRERMTGAKYTYAAQGKWISGLAPYGYQLNKKTSKLDPVEDEAKVVQLIFNIFLNGLNGKDYSYTAIASHLTNLQIPTPSGKKRWNQYTIKAILQNEVYIGTVKYKVREKTKDGKRTIRPEKEQIVVQDAHAPIIDKEQFQQSQVKIANKVPLLPNKDEFELSELAGVCTCSKCGEPLSKYESKRIRKNKDGTESVYHVKSLTCKKNKCTYVRYNDVENAILDYLSSLNDLNDSTLTKHINSMLSKYEDDNSNMKTKKQMSEHLSQKEKELKNKENFIFDKYESGIYSDELFLKRKAALDEEFKELQNAKNELNGLQDTQSEIDSNTVRNNINKIIDQYHIESSSEKKNELLRMVLKDVIVNMTQKRKGPIPAQFEITPILRFNFIFDLTATNSFH.

Positions 14–165 (NILGYLRRSR…GAKYTYAAQG (152 aa)) constitute a Resolvase/invertase-type recombinase catalytic domain. The stretch at 19–46 (LRRSRQDMEREKRTGEDTLTEQKELMNK) forms a coiled coil. The active-site O-(5'-phospho-DNA)-serine intermediate is S22. Residues 173–303 (PYGYQLNKKT…VKIANKVPLL (131 aa)) constitute a DNA-binding region (recombinase). Residues 402-475 (NMKTKKQMSE…QDTQSEIDSN (74 aa)) are a coiled coil.

The protein in the N-terminal section; belongs to the site-specific recombinase resolvase family.

The sequence is that of Resolvase homolog YokA (yokA) from Bacillus subtilis (strain 168).